A 538-amino-acid chain; its full sequence is Importin subunit alpha-6 (538 aa).

Residues 1 to 58 (MSYKPSAKTEVRRNRYKVSVDADEGRRRREDNMVEIRKNKREENLQKKRREGFNPSMA) enclose the IBB domain. A disordered region spans residues 1–69 (MSYKPSAKTE…QPGQDFSSSL (69 aa)). Over residues 7 to 46 (AKTEVRRNRYKVSVDADEGRRRREDNMVEIRKNKREENLQ) the composition is skewed to basic and acidic residues. The span at 56–69 (SMASQPGQDFSSSL) shows a compositional bias: polar residues. ARM repeat units lie at residues 109-149 (NPPI…NIAS), 152-191 (SENTRVIIDSGAVPLFVKLLSSASEEVREQAVWALGNVAG), 194-234 (PKCR…NFCR), 236-275 (KPQPAFEQTKAALPALERLLHSTDEEVLTDASWALSYLSD), 278-317 (NEKIQTVIDAGVIPRLVQLLAHPSPSVLIPALRTIGNIVT), 320-360 (DIQT…NITA), 363-402 (TSQIQEVFQAGIIRPLINLLEIGEFEIKKEAVWAISNATS), and 406-445 (HDQIKFLVSQGCIRPLCDLLPCPDPRVVTVTLEGLENILK).

This sequence belongs to the importin alpha family. In terms of assembly, forms a complex with importin subunit beta-1.

Its subcellular location is the nucleus envelope. Binds to conventional NLS motifs and mediates nuclear protein import across the nuclear envelope. Acts as a cellular receptor for the nuclear import of the virD2 protein of Agrobacterium, but is not essential for Agrobacterium-mediated root transformation. This chain is Importin subunit alpha-6, found in Arabidopsis thaliana (Mouse-ear cress).